We begin with the raw amino-acid sequence, 140 residues long: ATP synthase epsilon chain (140 aa).

This sequence belongs to the ATPase epsilon chain family. In terms of assembly, F-type ATPases have 2 components, CF(1) - the catalytic core - and CF(0) - the membrane proton channel. CF(1) has five subunits: alpha(3), beta(3), gamma(1), delta(1), epsilon(1). CF(0) has three main subunits: a, b and c.

The protein localises to the cell inner membrane. Its function is as follows. Produces ATP from ADP in the presence of a proton gradient across the membrane. This Alkalilimnicola ehrlichii (strain ATCC BAA-1101 / DSM 17681 / MLHE-1) protein is ATP synthase epsilon chain.